The primary structure comprises 426 residues: MYVLKNGQVLNASGELENKDVLIQNGKVNLIADSIEVTSGEEFDATGKLIAPGFIDVHVHLREPGGEHKETILTGTQAAARGGYTTICSMPNTKPVPDSKEVMENLQAKIKETAEVRVLPYASITTSLGTDELVDFEALKEAGAFAFTDDGVGVQLAGTMYEAMKRAAALDMAIVAHCEDNSLIYGGVVHDGIFAEKEGLKGIPNIAESVQIARDVLLAEAAGCHYHVCHISTKESVRVVRDAKRAGIRVTAEVSPHHLILDEEAIPGNDGNWKMNPPLRSKADRAALLEGLLDGTIDFIATDHAPHAAEEKNVPMEQAAFGIVGLETGFPLLYTHFVKTNEWTLKQLIDWMTVKPAECFKLPYGKLEEGSVADIVVLDLEKEATIDPATFYSKGKNTPFVGETCIGWPVATFAEGTLVYNEGEIK.

The Zn(2+) site is built by His58 and His60. Substrate contacts are provided by residues 60–62 and Asn92; that span reads HLR. Zn(2+)-binding residues include Asp150, His177, and His230. Asn276 provides a ligand contact to substrate. Asp303 is a binding site for Zn(2+). Asp303 is an active-site residue. Substrate-binding positions include His307 and 321–322; that span reads FG.

The protein belongs to the metallo-dependent hydrolases superfamily. DHOase family. Class I DHOase subfamily. Zn(2+) serves as cofactor.

The enzyme catalyses (S)-dihydroorotate + H2O = N-carbamoyl-L-aspartate + H(+). Its pathway is pyrimidine metabolism; UMP biosynthesis via de novo pathway; (S)-dihydroorotate from bicarbonate: step 3/3. Its function is as follows. Catalyzes the reversible cyclization of carbamoyl aspartate to dihydroorotate. This Listeria monocytogenes serotype 4a (strain HCC23) protein is Dihydroorotase.